A 129-amino-acid polypeptide reads, in one-letter code: Small ribosomal subunit protein uS11 (129 aa).

It belongs to the universal ribosomal protein uS11 family. In terms of assembly, part of the 30S ribosomal subunit. Interacts with proteins S7 and S18. Binds to IF-3.

Located on the platform of the 30S subunit, it bridges several disparate RNA helices of the 16S rRNA. Forms part of the Shine-Dalgarno cleft in the 70S ribosome. In Lawsonia intracellularis (strain PHE/MN1-00), this protein is Small ribosomal subunit protein uS11.